We begin with the raw amino-acid sequence, 242 residues long: Anthranilate phosphoribosyltransferase (242 aa).

Residues Gly-79, 82 to 83 (GD), Thr-87, 89 to 92 (NVST), 107 to 115 (KHGNRAVSS), and Ser-119 contribute to the 5-phospho-alpha-D-ribose 1-diphosphate site. Gly-79 contacts anthranilate. Ser-91 contributes to the Mg(2+) binding site. Asn-110 lines the anthranilate pocket. Arg-165 contacts anthranilate. Residues Asp-224 and Glu-225 each coordinate Mg(2+).

It belongs to the anthranilate phosphoribosyltransferase family. In terms of assembly, homodimer. Mg(2+) serves as cofactor.

The catalysed reaction is N-(5-phospho-beta-D-ribosyl)anthranilate + diphosphate = 5-phospho-alpha-D-ribose 1-diphosphate + anthranilate. It functions in the pathway amino-acid biosynthesis; L-tryptophan biosynthesis; L-tryptophan from chorismate: step 2/5. Functionally, catalyzes the transfer of the phosphoribosyl group of 5-phosphorylribose-1-pyrophosphate (PRPP) to anthranilate to yield N-(5'-phosphoribosyl)-anthranilate (PRA). This chain is Anthranilate phosphoribosyltransferase (trpD), found in Bacillus caldotenax.